A 282-amino-acid chain; its full sequence is ADP-ribosyl cyclase/cyclic ADP-ribose hydrolase (282 aa).

The first 24 residues, 1–24 (MSPVAIVACVCLAVTLTRISPSEA), serve as a signal peptide directing secretion. Cystine bridges form between Cys39–Cys58, Cys75–Cys155, Cys136–Cys149, Cys230–Cys251, and Cys263–Cys272.

It belongs to the ADP-ribosyl cyclase family. In terms of tissue distribution, ovotestis.

It localises to the cytoplasmic vesicle. The catalysed reaction is NAD(+) = cyclic ADP-beta-D-ribose + nicotinamide + H(+). The enzyme catalyses NAD(+) + H2O = ADP-D-ribose + nicotinamide + H(+). It catalyses the reaction nicotinate + NADP(+) = nicotinate-adenine dinucleotide phosphate + nicotinamide. Activity is presumably regulated by its sequestration in vesicles before egg fertilization. After fertilization and upon NADase release, it could then be regulated via its potential phosphorylation sites. Its function is as follows. Synthesizes cyclic ADP-ribose (cADPR), a second messenger for calcium mobilization from endoplasmic reticulum. Might make the Ca(2+) mobilizer nicotinate-adenine dinucleotide phosphate. Does not have cADPR hydrolase activity. In Aplysia kurodai (Kuroda's sea hare), this protein is ADP-ribosyl cyclase/cyclic ADP-ribose hydrolase.